The sequence spans 325 residues: BES1/BZR1 homolog protein 4 (325 aa).

The segment at 1–21 (MTSGTRMPTWRERENNKRRER) is disordered. Residues 6–89 (RMPTWREREN…RMEIGGGSAT (84 aa)) form a required for DNA-binding region. At T169 the chain carries Phosphothreonine. Residues 304 to 325 (ERIHEESGSDDLELTLGNSSTR) form a disordered region.

It belongs to the BZR/LAT61 family. In terms of processing, phosphorylated. Phosphorylation increases protein degradation.

The chain is BES1/BZR1 homolog protein 4 (BEH4) from Arabidopsis thaliana (Mouse-ear cress).